Here is a 115-residue protein sequence, read N- to C-terminus: NADH-ubiquinone oxidoreductase chain 3 (115 aa).

Transmembrane regions (helical) follow at residues 3–23 (LLMALFIDASLSLILISIAFW), 55–75 (FFLVAITFLLFDLEIALLLPL), and 84–104 (LSAMMVTSFILISVLALGLMY).

This sequence belongs to the complex I subunit 3 family. As to quaternary structure, core subunit of respiratory chain NADH dehydrogenase (Complex I) which is composed of 45 different subunits. Interacts with TMEM186. Interacts with TMEM242.

The protein resides in the mitochondrion inner membrane. It carries out the reaction a ubiquinone + NADH + 5 H(+)(in) = a ubiquinol + NAD(+) + 4 H(+)(out). In terms of biological role, core subunit of the mitochondrial membrane respiratory chain NADH dehydrogenase (Complex I) which catalyzes electron transfer from NADH through the respiratory chain, using ubiquinone as an electron acceptor. Essential for the catalytic activity of complex I. The sequence is that of NADH-ubiquinone oxidoreductase chain 3 from Sigmodon ochrognathus (Yellow-nosed cotton rat).